Here is a 396-residue protein sequence, read N- to C-terminus: Elongation factor Tu (396 aa).

The region spanning 11-205 is the tr-type G domain; the sequence is KPHVNIGTIG…TVDEYIPTPE (195 aa). A G1 region spans residues 20–27; sequence GHVDHGKT. 20 to 27 lines the GTP pocket; it reads GHVDHGKT. Thr27 provides a ligand contact to Mg(2+). A G2 region spans residues 61 to 65; the sequence is GITIN. The segment at 82 to 85 is G3; sequence DAPG. GTP-binding positions include 82–86 and 137–140; these read DAPGH and NKVD. The interval 137 to 140 is G4; the sequence is NKVD. Residues 175–177 form a G5 region; that stretch reads SAL.

It belongs to the TRAFAC class translation factor GTPase superfamily. Classic translation factor GTPase family. EF-Tu/EF-1A subfamily. As to quaternary structure, monomer.

It is found in the cytoplasm. The enzyme catalyses GTP + H2O = GDP + phosphate + H(+). GTP hydrolase that promotes the GTP-dependent binding of aminoacyl-tRNA to the A-site of ribosomes during protein biosynthesis. This chain is Elongation factor Tu, found in Lactobacillus johnsonii (strain CNCM I-12250 / La1 / NCC 533).